A 498-amino-acid chain; its full sequence is Glycerol kinase (498 aa).

Thr-12 is an ADP binding site. The ATP site is built by Thr-12, Thr-13, and Ser-14. Thr-12 serves as a coordination point for sn-glycerol 3-phosphate. Arg-16 lines the ADP pocket. Arg-82, Glu-83, Tyr-134, and Asp-244 together coordinate sn-glycerol 3-phosphate. 5 residues coordinate glycerol: Arg-82, Glu-83, Tyr-134, Asp-244, and Gln-245. Residues Thr-266 and Gly-310 each contribute to the ADP site. Residues Thr-266, Gly-310, Gln-314, and Gly-411 each contribute to the ATP site. Residues Gly-411 and Asn-415 each coordinate ADP.

The protein belongs to the FGGY kinase family.

The enzyme catalyses glycerol + ATP = sn-glycerol 3-phosphate + ADP + H(+). The protein operates within polyol metabolism; glycerol degradation via glycerol kinase pathway; sn-glycerol 3-phosphate from glycerol: step 1/1. With respect to regulation, inhibited by fructose 1,6-bisphosphate (FBP). Functionally, key enzyme in the regulation of glycerol uptake and metabolism. Catalyzes the phosphorylation of glycerol to yield sn-glycerol 3-phosphate. This chain is Glycerol kinase, found in Azorhizobium caulinodans (strain ATCC 43989 / DSM 5975 / JCM 20966 / LMG 6465 / NBRC 14845 / NCIMB 13405 / ORS 571).